Reading from the N-terminus, the 676-residue chain is UvrABC system protein B (676 aa).

In terms of domain architecture, Helicase ATP-binding spans 26–414; it reads EGLDAGLAHQ…SAGEIADQVV (389 aa). Position 39 to 46 (39 to 46) interacts with ATP; that stretch reads GVTGSGKT. Residues 92-115 carry the Beta-hairpin motif; the sequence is YYDYYQPEAYVPTTDTFIEKDASV. The Helicase C-terminal domain occupies 432 to 598; the sequence is QVDDLLSEIR…ALKRNIKDIM (167 aa). The UVR domain occupies 636–671; sequence EKEISRLEAAMYQHAQDLEFELAAEKRDEIEKLRAQ.

The protein belongs to the UvrB family. As to quaternary structure, forms a heterotetramer with UvrA during the search for lesions. Interacts with UvrC in an incision complex.

The protein localises to the cytoplasm. The UvrABC repair system catalyzes the recognition and processing of DNA lesions. A damage recognition complex composed of 2 UvrA and 2 UvrB subunits scans DNA for abnormalities. Upon binding of the UvrA(2)B(2) complex to a putative damaged site, the DNA wraps around one UvrB monomer. DNA wrap is dependent on ATP binding by UvrB and probably causes local melting of the DNA helix, facilitating insertion of UvrB beta-hairpin between the DNA strands. Then UvrB probes one DNA strand for the presence of a lesion. If a lesion is found the UvrA subunits dissociate and the UvrB-DNA preincision complex is formed. This complex is subsequently bound by UvrC and the second UvrB is released. If no lesion is found, the DNA wraps around the other UvrB subunit that will check the other stand for damage. The polypeptide is UvrABC system protein B (Vibrio parahaemolyticus serotype O3:K6 (strain RIMD 2210633)).